The primary structure comprises 106 residues: BLOC-1-related complex subunit 7 (106 aa).

This sequence belongs to the BORCS7 family. In terms of assembly, component of the BLOC-one-related complex (BORC) which is composed of BLOC1S1, BLOC1S2, BORCS5, BORCS6, BORCS7, BORCS8, KXD1 and SNAPIN.

The protein resides in the lysosome membrane. Functionally, as part of the BORC complex may play a role in lysosomes movement and localization at the cell periphery. Associated with the cytosolic face of lysosomes, the BORC complex may recruit ARL8B and couple lysosomes to microtubule plus-end-directed kinesin motor. The chain is BLOC-1-related complex subunit 7 from Pongo abelii (Sumatran orangutan).